The sequence spans 211 residues: MSVTALGMMLIAYLCGSISSAILFCRIAGLPDPRQHGSGNPGATNVLRIGGKAAAATVLVFDVLKGMLPVWAAYALGVSPLYLGLTAIAACLGHIYPVFFHFRGGKGVATAFGAIAPIGWDLTGLMTGTWLLTVLLSGYSSLGAIVSALIAPFYVWWFKPQFTFPVAMLSCLILMRHHDNIQRLWRGQESKIWNKLRKKKQPEDEKTSPEE.

4 helical membrane-spanning segments follow: residues 5–25 (ALGM…ILFC), 80–100 (PLYL…PVFF), 112–132 (FGAI…TWLL), and 138–158 (GYSS…VWWF).

This sequence belongs to the PlsY family. As to quaternary structure, probably interacts with PlsX.

The protein resides in the cell inner membrane. The catalysed reaction is an acyl phosphate + sn-glycerol 3-phosphate = a 1-acyl-sn-glycero-3-phosphate + phosphate. It participates in lipid metabolism; phospholipid metabolism. Catalyzes the transfer of an acyl group from acyl-phosphate (acyl-PO(4)) to glycerol-3-phosphate (G3P) to form lysophosphatidic acid (LPA). This enzyme utilizes acyl-phosphate as fatty acyl donor, but not acyl-CoA or acyl-ACP. The sequence is that of Glycerol-3-phosphate acyltransferase from Pectobacterium carotovorum subsp. carotovorum (strain PC1).